The sequence spans 187 residues: CASP-like protein 3A2 (187 aa).

Topologically, residues 1–24 (MTSNGEGGEVVAKRRRKGIKELVQ) are cytoplasmic. Residues 25-45 (VALRGGCLAASATAMAVMLTA) traverse the membrane as a helical segment. At 46-71 (TEEGVADIYGFKLTLSSNWSFSPSYQ) the chain is on the extracellular side. A glycan (N-linked (GlcNAc...) asparagine) is linked at Asn63. A helical membrane pass occupies residues 72 to 92 (YVVGACAGTVLYSLLQLCLGV). The Cytoplasmic portion of the chain corresponds to 93–107 (YRLVTGSPITPSRFQ). A helical transmembrane segment spans residues 108–128 (AWLCFTSDQLFCYLMMSAGSA). Topologically, residues 129–162 (GSGVTNLNKTGIRHTPLPDFCKTLSSFCNHVALS) are extracellular. Asn136 carries N-linked (GlcNAc...) asparagine glycosylation. The helical transmembrane segment at 163 to 183 (LLLVFLSFIFLASSSFFTVLV) threads the bilayer. At 184-187 (LSTP) the chain is on the cytoplasmic side.

Belongs to the Casparian strip membrane proteins (CASP) family. Homodimer and heterodimers.

The protein resides in the cell membrane. This Arabidopsis thaliana (Mouse-ear cress) protein is CASP-like protein 3A2.